The sequence spans 247 residues: tRNA pseudouridine synthase A (247 aa).

Asp52 (nucleophile) is an active-site residue. Tyr111 is a substrate binding site.

The protein belongs to the tRNA pseudouridine synthase TruA family. Homodimer.

It carries out the reaction uridine(38/39/40) in tRNA = pseudouridine(38/39/40) in tRNA. Formation of pseudouridine at positions 38, 39 and 40 in the anticodon stem and loop of transfer RNAs. This Caulobacter vibrioides (strain ATCC 19089 / CIP 103742 / CB 15) (Caulobacter crescentus) protein is tRNA pseudouridine synthase A.